The following is a 139-amino-acid chain: MKPAARRRARECAVQALYSWQISKNDIADVEYQFLSEQDVKDVDVNYFRELLSGVASNAEYLDGLMAPVLSRQLDELGQVERAILRVSIYELSKRQDVPYKVAINEGIELAKIFGAEDSHKFVNGVLDKVAPQVRPNRK.

This sequence belongs to the NusB family.

Functionally, involved in transcription antitermination. Required for transcription of ribosomal RNA (rRNA) genes. Binds specifically to the boxA antiterminator sequence of the ribosomal RNA (rrn) operons. The chain is Transcription antitermination protein NusB from Edwardsiella ictaluri (strain 93-146).